Reading from the N-terminus, the 476-residue chain is Eukaryotic translation initiation factor 3 subunit L (476 aa).

Positions 257–452 (DAIRMFSHIL…DLDYALENDL (196 aa)) constitute a PCI domain.

It belongs to the eIF-3 subunit L family. In terms of assembly, component of the eukaryotic translation initiation factor 3 (eIF-3) complex.

Its subcellular location is the cytoplasm. Its function is as follows. Component of the eukaryotic translation initiation factor 3 (eIF-3) complex, which is involved in protein synthesis of a specialized repertoire of mRNAs and, together with other initiation factors, stimulates binding of mRNA and methionyl-tRNAi to the 40S ribosome. The eIF-3 complex specifically targets and initiates translation of a subset of mRNAs involved in cell proliferation. This Aspergillus fumigatus (strain CBS 144.89 / FGSC A1163 / CEA10) (Neosartorya fumigata) protein is Eukaryotic translation initiation factor 3 subunit L.